We begin with the raw amino-acid sequence, 138 residues long: Large ribosomal subunit protein bL19 (138 aa).

This sequence belongs to the bacterial ribosomal protein bL19 family.

Functionally, this protein is located at the 30S-50S ribosomal subunit interface and may play a role in the structure and function of the aminoacyl-tRNA binding site. The chain is Large ribosomal subunit protein bL19 from Rickettsia rickettsii (strain Iowa).